A 234-amino-acid polypeptide reads, in one-letter code: Mitochondrial assembly of ribosomal large subunit protein 1 (234 aa).

Residues 63-88 (SEPGLEERAEGTVNEGRPESDAADHT) form a disordered region.

It belongs to the Iojap/RsfS family. Associates with the mitochondrial ribosome large subunit (39S) via interaction with MRPL12 and/or MRPL14. The interaction generates steric hindrance that is expected to prevent premature association of the 28S and 39S ribosomal subunits. Interacts with intermediates of the mitochondrial ribosome large subunit (mt-LSU) (recruits the mitochondrial ribosome and complex I assembly factor AltMIEF1 and NDUFAB1); regulates mitochondrial ribosomes assembly. Interacts with MRPL12 and MRPL14.

Its subcellular location is the mitochondrion matrix. In terms of biological role, required for normal mitochondrial ribosome function and mitochondrial translation. May play a role in ribosome biogenesis by preventing premature association of the 28S and 39S ribosomal subunits. Interacts with mitochondrial ribosomal protein uL14m (MRPL14), probably blocking formation of intersubunit bridge B8, preventing association of the 28S and 39S ribosomal subunits. Addition to isolated mitochondrial ribosomal subunits partially inhibits translation, probably by interfering with the association of the 28S and 39S ribosomal subunits and the formation of functional ribosomes. May also participate in the assembly and/or regulation of the stability of the large subunit of the mitochondrial ribosome. May function as a ribosomal silencing factor. This is Mitochondrial assembly of ribosomal large subunit protein 1 (MALSU1) from Homo sapiens (Human).